Reading from the N-terminus, the 84-residue chain is U4-theraphotoxin-Hhn1aa (84 aa).

The N-terminal stretch at 1–22 (MKVTLIAILTCAAVLVLHTTAA) is a signal peptide. Residues 23 to 47 (EELEESQLMEVGMPDTELAAVDEER) constitute a propeptide that is removed on maturation. Intrachain disulfides connect C51/C65 and C55/C76.

It belongs to the neurotoxin 12 (Hwtx-2) family. 02 (Hwtx-2) subfamily. In terms of tissue distribution, expressed by the venom gland.

The protein resides in the secreted. Its function is as follows. Postsynaptic neurotoxin. The polypeptide is U4-theraphotoxin-Hhn1aa (Cyriopagopus hainanus (Chinese bird spider)).